The following is a 186-amino-acid chain: Chromosome-anchoring protein RacA (186 aa).

The segment at residues 3 to 23 (TADAANELGVSTKTVQRWVKQ) is a DNA-binding region (H-T-H motif). The stretch at 90 to 170 (ERLEERLQRF…NRREKDTAVR (81 aa)) forms a coiled coil. The tract at residues 158 to 186 (ESMNRREKDTAVRREEKKPKSKLKSIFSF) is disordered. Residues 160 to 175 (MNRREKDTAVRREEKK) show a composition bias toward basic and acidic residues.

It belongs to the RacA family.

The protein resides in the cytoplasm. Functionally, required for the formation of axial filaments and for anchoring the origin regions at the cell poles in sporulating cells, thus ensuring proper chromosome segregation in the prespore. Binds in a dispersed manner throughout the chromosome but preferentially to sites clustered in the origin portion of the chromosome, causing condensation of the chromosome and its remodeling into an elongated, anchored structure. The sequence is that of Chromosome-anchoring protein RacA from Bacillus licheniformis (strain ATCC 14580 / DSM 13 / JCM 2505 / CCUG 7422 / NBRC 12200 / NCIMB 9375 / NCTC 10341 / NRRL NRS-1264 / Gibson 46).